Reading from the N-terminus, the 152-residue chain is Ubiquitin-conjugating enzyme E2 N (152 aa).

A UBC core domain is found at 3 to 149; it reads GLPRRIIKET…ARAWTRLYAM (147 aa). Lys-82 is subject to N6-acetyllysine. The Glycyl thioester intermediate role is filled by Cys-87. Lys-92 participates in a covalent cross-link: Glycyl lysine isopeptide (Lys-Gly) (interchain with G-Cter in ISG15).

Belongs to the ubiquitin-conjugating enzyme family. In terms of assembly, heterodimer with UBE2V2. Interacts (UBE2V2-UBE2N heterodimer) with the E3 ligase STUB1 (via the U-box domain); the complex has a specific 'Lys-63'-linked polyubiquitination activity. Interacts with RNF8 and RNF168. Interacts with RNF11. Interacts with the E3 ligases, HLTF and SHPRH; the interactions promote the 'Lys-63'-linked polyubiquitination of PCNA upon genotoxic stress and lead to DNA repair. Interacts with ARIH2 (via RING-type 2). Interacts with OTUB1; leading to inhibit E2-conjugating activity. Interacts with RIGI and RNF135; involved in RIGI ubiquitination and activation. Conjugation to ISG15 impairs formation of the thioester bond with ubiquitin but not interaction with UBE2V2.

The catalysed reaction is S-ubiquitinyl-[E1 ubiquitin-activating enzyme]-L-cysteine + [E2 ubiquitin-conjugating enzyme]-L-cysteine = [E1 ubiquitin-activating enzyme]-L-cysteine + S-ubiquitinyl-[E2 ubiquitin-conjugating enzyme]-L-cysteine.. The protein operates within protein modification; protein ubiquitination. Activity is inhibited by binding to OTUB1, which prevents 'Lys-63'-linked polyubiquitination. Functionally, the UBE2V1-UBE2N and UBE2V2-UBE2N heterodimers catalyze the synthesis of non-canonical 'Lys-63'-linked polyubiquitin chains. This type of polyubiquitination does not lead to protein degradation by the proteasome. Mediates transcriptional activation of target genes. Plays a role in the control of progress through the cell cycle and differentiation. Plays a role in the error-free DNA repair pathway and contributes to the survival of cells after DNA damage. Acts together with the E3 ligases, HLTF and SHPRH, in the 'Lys-63'-linked poly-ubiquitination of PCNA upon genotoxic stress, which is required for DNA repair. Appears to act together with E3 ligase RNF5 in the 'Lys-63'-linked polyubiquitination of JKAMP thereby regulating JKAMP function by decreasing its association with components of the proteasome and ERAD. Promotes TRIM5 capsid-specific restriction activity and the UBE2V1-UBE2N heterodimer acts in concert with TRIM5 to generate 'Lys-63'-linked polyubiquitin chains which activate the MAP3K7/TAK1 complex which in turn results in the induction and expression of NF-kappa-B and MAPK-responsive inflammatory genes. Together with RNF135 and UB2V1, catalyzes the viral RNA-dependent 'Lys-63'-linked polyubiquitination of RIGI to activate the downstream signaling pathway that leads to interferon beta production. UBE2V1-UBE2N together with TRAF3IP2 E3 ubiquitin ligase mediate 'Lys-63'-linked polyubiquitination of TRAF6, a component of IL17A-mediated signaling pathway. This Macaca fascicularis (Crab-eating macaque) protein is Ubiquitin-conjugating enzyme E2 N (UBE2N).